The following is a 99-amino-acid chain: Transmembrane protein 14A (99 aa).

A run of 3 helical transmembrane segments spans residues 1–21 (MDLIGFGYAALVTIGSVLGYK), 24–44 (GGVPSLIAGLSVGLLAGYGAY), and 79–99 (PAGLVAGLSLMMILRLVLLLL).

The protein belongs to the TMEM14 family.

It is found in the mitochondrion membrane. It localises to the endoplasmic reticulum membrane. Functionally, inhibits apoptosis via negative regulation of the mitochondrial outer membrane permeabilization involved in apoptotic signaling pathway. This is Transmembrane protein 14A (Tmem14a) from Mus musculus (Mouse).